The chain runs to 399 residues: Zinc finger HIT domain-containing protein 2 (399 aa).

N-acetylmethionine is present on Met1. Cys7, Cys10, Cys22, Cys25, Cys30, Cys34, His38, and Cys41 together coordinate Zn(2+). The HIT-type zinc finger occupies 7 to 41 (CGFCPTGEAQPARYTCPRCNVPYCSLRCYRAHGSC). 2 disordered regions span residues 71–97 (LRQQ…GLSG) and 141–166 (EELG…PEPV).

In terms of assembly, interacts (via HIT-type zinc finger) with RUVBL2 in the presence of ATP or ADP; shows a stronger interaction in the presence of ADP.

In terms of biological role, may act as a bridging factor mediating the interaction between the R2TP/Prefoldin-like (R2TP/PFDL) complex and U5 small nuclear ribonucleoprotein (U5 snRNP). Required for the interaction of R2TP complex subunit RPAP3 and prefoldin-like subunit URI1 with U5 snRNP proteins EFTUD2 and PRPF8. May play a role in regulating the composition of the U5 snRNP complex. This is Zinc finger HIT domain-containing protein 2 (ZNHIT2) from Bos taurus (Bovine).